The primary structure comprises 387 residues: uncharacterized protein (387 aa).

This sequence belongs to the geranylgeranyl reductase family. ChlP subfamily.

This is an uncharacterized protein from Methanosarcina barkeri (strain Fusaro / DSM 804).